Here is a 156-residue protein sequence, read N- to C-terminus: SsrA-binding protein (156 aa).

This sequence belongs to the SmpB family.

Its subcellular location is the cytoplasm. Its function is as follows. Required for rescue of stalled ribosomes mediated by trans-translation. Binds to transfer-messenger RNA (tmRNA), required for stable association of tmRNA with ribosomes. tmRNA and SmpB together mimic tRNA shape, replacing the anticodon stem-loop with SmpB. tmRNA is encoded by the ssrA gene; the 2 termini fold to resemble tRNA(Ala) and it encodes a 'tag peptide', a short internal open reading frame. During trans-translation Ala-aminoacylated tmRNA acts like a tRNA, entering the A-site of stalled ribosomes, displacing the stalled mRNA. The ribosome then switches to translate the ORF on the tmRNA; the nascent peptide is terminated with the 'tag peptide' encoded by the tmRNA and targeted for degradation. The ribosome is freed to recommence translation, which seems to be the essential function of trans-translation. The chain is SsrA-binding protein from Maricaulis maris (strain MCS10) (Caulobacter maris).